Consider the following 266-residue polypeptide: MKLSLSPPPYADAPVVVLISGLGGSGSYWLPQLAVLDQEYQVVCYDQRGTGNNPDTLAEDYSIAQMAAELHQALVAAGIERYAVVGHALGALVGMQLALDYPASVTVLVSVNGWLRINTHTRRCFQVREQLLHSGGAQAWVEAQPLFLYPADWMAARAPRLEAEDALALAHFQGKNNLLRRLNALKRADFSHHADRIRCPVQIICASDDLLVPTACSSELHAALPDSQKMVMRYGGHACNVTDPETFNALLLNGLASLLHHREAAL.

Belongs to the AB hydrolase superfamily. Hydrolase RutD family.

It catalyses the reaction carbamate + 2 H(+) = NH4(+) + CO2. Its function is as follows. Involved in pyrimidine catabolism. May facilitate the hydrolysis of carbamate, a reaction that can also occur spontaneously. The protein is Putative carbamate hydrolase RutD of Escherichia coli O150:H5 (strain SE15).